A 571-amino-acid polypeptide reads, in one-letter code: MSMSSKNENKISVEQRISTDIGQAYQLQGLGSNLRSIRSKTGAGEVNYIDAAKSVNDNQLLAEIGYKQELKRQFSTLQVFGIAFSIMGLLPSIASVMGGGLGGGPATLVWGWFVAAFFILLVGITMAEHASSIPTAGGLYYWTYYYAPEGYKEIISFIIGCSNSLALAAGVCSIDYGLAEEIAAAVTLTKDGNFEVTSGKLYGIFAGAVVVMCICTCVASGAIARLQTLSIFANLFIIVLLFIALPIGTKHRMGGFNDGDFIFGKYENLSDWNNGWQFCLAGFMPAVWTIGSFDSCVHQSEEAKDAKKSVPIGIISSIAVCWILGWLIIICLMACINPDIDSVLDSKYGFALAQIIYDSLGKKWAIAFMSLIAFCQFLMGASITTAVSRQVWAFSRDNGLPLSKYIKRVDSKYSVPFFAILAACVGSLILGLLCLIDDAATDALFSLAVAGNNLAWSTPTVFRLTSGRDLFRPGPFYLGKIWSPIVAWTGVAFQLFIIILVMFPSQQHGITKSTMNYACVIGPGIWILAGIYYKVYKKKYYHGPATNLSDDDYTEAVGADVIDTIMSKQEP.

At 1–73 (MSMSSKNENK…IGYKQELKRQ (73 aa)) the chain is on the cytoplasmic side. Residues 74-94 (FSTLQVFGIAFSIMGLLPSIA) form a helical membrane-spanning segment. At 95–105 (SVMGGGLGGGP) the chain is on the vacuolar side. Residues 106-126 (ATLVWGWFVAAFFILLVGITM) form a helical membrane-spanning segment. The Cytoplasmic segment spans residues 127 to 153 (AEHASSIPTAGGLYYWTYYYAPEGYKE). The helical transmembrane segment at 154–174 (IISFIIGCSNSLALAAGVCSI) threads the bilayer. Topologically, residues 175 to 198 (DYGLAEEIAAAVTLTKDGNFEVTS) are vacuolar. A helical membrane pass occupies residues 199 to 219 (GKLYGIFAGAVVVMCICTCVA). Residues 220 to 228 (SGAIARLQT) are Cytoplasmic-facing. A helical transmembrane segment spans residues 229–249 (LSIFANLFIIVLLFIALPIGT). Residues 250-271 (KHRMGGFNDGDFIFGKYENLSD) are Vacuolar-facing. The chain crosses the membrane as a helical span at residues 272–292 (WNNGWQFCLAGFMPAVWTIGS). Over 293-312 (FDSCVHQSEEAKDAKKSVPI) the chain is Cytoplasmic. Residues 313–333 (GIISSIAVCWILGWLIIICLM) form a helical membrane-spanning segment. Residues 334-364 (ACINPDIDSVLDSKYGFALAQIIYDSLGKKW) lie on the Vacuolar side of the membrane. Residues 365–385 (AIAFMSLIAFCQFLMGASITT) form a helical membrane-spanning segment. Topologically, residues 386-416 (AVSRQVWAFSRDNGLPLSKYIKRVDSKYSVP) are cytoplasmic. A helical transmembrane segment spans residues 417-437 (FFAILAACVGSLILGLLCLID). The Vacuolar segment spans residues 438-441 (DAAT). Residues 442-462 (DALFSLAVAGNNLAWSTPTVF) traverse the membrane as a helical segment. The Cytoplasmic portion of the chain corresponds to 463–482 (RLTSGRDLFRPGPFYLGKIW). The helical transmembrane segment at 483–503 (SPIVAWTGVAFQLFIIILVMF) threads the bilayer. Over 504 to 514 (PSQQHGITKST) the chain is Vacuolar. Residues 515 to 535 (MNYACVIGPGIWILAGIYYKV) traverse the membrane as a helical segment. Over 536 to 571 (YKKKYYHGPATNLSDDDYTEAVGADVIDTIMSKQEP) the chain is Cytoplasmic.

This sequence belongs to the amino acid-polyamine-organocation (APC) superfamily. Amino acid/choline transporter (ACT) (TC 2.A.3.4) family.

The protein resides in the vacuole membrane. Functionally, required for high-affinity, high-specificity GABA transport. Also transports putrescine. The sequence is that of GABA-specific permease (UGA4) from Saccharomyces cerevisiae (strain ATCC 204508 / S288c) (Baker's yeast).